The chain runs to 1258 residues: Phospholipid-transporting ATPase C887.12 (1258 aa).

2 disordered regions span residues 1-41 (MARD…LGED) and 53-83 (YISS…SKAN). The Cytoplasmic portion of the chain corresponds to 1–183 (MARDVDNKQN…PKFLKEQFSK (183 aa)). The span at 53–64 (YISSSGQNSTNP) shows a compositional bias: polar residues. The chain crosses the membrane as a helical span at residues 184-204 (YANLFFLFTAVVQQIPGITPV). Residues 205 to 208 (NRYT) lie on the Lumenal side of the membrane. A helical transmembrane segment spans residues 209 to 229 (TIGPMLIVLSVSGIKEIMEDI). The Cytoplasmic segment spans residues 230–406 (KRKKQDQELN…TSVEKQVNSQ (177 aa)). Residues 407–427 (ILFLLCIFVFLCFASSLGALI) traverse the membrane as a helical segment. Residues 428-451 (HRSVYGSALSYVKYTSNRAGMFFK) lie on the Lumenal side of the membrane. A helical transmembrane segment spans residues 452-472 (GLLTFWILYSNLVPISLFVTF). Over 473-974 (ELVRYIQAQL…KLILYSFYKN (502 aa)) the chain is Cytoplasmic. Asp518 (4-aspartylphosphate intermediate) is an active-site residue. Residues Asp518, Lys519, Thr520, Glu613, Phe654, Ser656, Lys659, Lys677, Arg710, Thr711, Thr790, Gly791, Asp792, Arg883, and Lys889 each contribute to the ATP site. Residue Asp518 coordinates Mg(2+). Thr520 is a binding site for Mg(2+). Asp909 contacts Mg(2+). Residues Asn912 and Asp913 each coordinate ATP. Asp913 serves as a coordination point for Mg(2+). Residues 975 to 995 (IALYMTQFWYAFCNAFSGQVI) form a helical membrane-spanning segment. The Lumenal portion of the chain corresponds to 996–998 (FES). Residues 999–1019 (WSISLYNVLFTVLPPVVIGIF) traverse the membrane as a helical segment. Residues 1020–1051 (DQFVSAGQLFQYPQLYQLGQRSEFFNLKRFWS) are Cytoplasmic-facing. The helical transmembrane segment at 1052-1072 (WITNGFYHSLLLFLCSIAVFY) threads the bilayer. The Lumenal portion of the chain corresponds to 1073–1086 (YDGPNKDGLASGHW). The helical transmembrane segment at 1087–1107 (VWGTTLYAAILATVLGKAALI) threads the bilayer. Lys1103 provides a ligand contact to a 1,2-diacyl-sn-glycero-3-phospho-(1D-myo-inositol 4-phosphate). Residues 1108–1115 (SNHWTQYT) lie on the Cytoplasmic side of the membrane. A helical membrane pass occupies residues 1116–1136 (VIATLGSFLLWIVFMPIYAVA). Topologically, residues 1137–1148 (APAIGFSKEYYG) are lumenal. A helical transmembrane segment spans residues 1149–1169 (IIPHLYGNLKFWASLLVLPTI). The Cytoplasmic portion of the chain corresponds to 1170–1258 (ALMRDFVWKY…HTRGAYGEMR (89 aa)). A 1,2-diacyl-sn-glycero-3-phospho-(1D-myo-inositol 4-phosphate)-binding residues include Arg1173, Trp1177, Lys1178, Tyr1189, and His1190.

The protein belongs to the cation transport ATPase (P-type) (TC 3.A.3) family. Type IV subfamily. Requires Mg(2+) as cofactor.

The protein resides in the endoplasmic reticulum membrane. The protein localises to the golgi apparatus. Its subcellular location is the trans-Golgi network membrane. It catalyses the reaction ATP + H2O + phospholipidSide 1 = ADP + phosphate + phospholipidSide 2.. The enzyme catalyses a 1,2-diacyl-sn-glycero-3-phospho-L-serine(out) + ATP + H2O = a 1,2-diacyl-sn-glycero-3-phospho-L-serine(in) + ADP + phosphate + H(+). The catalysed reaction is a 1,2-diacyl-sn-glycero-3-phosphoethanolamine(out) + ATP + H2O = a 1,2-diacyl-sn-glycero-3-phosphoethanolamine(in) + ADP + phosphate + H(+). Functionally, catalytic component of a P4-ATPase flippase complex which catalyzes the hydrolysis of ATP coupled to the transport of phosphatidylserine and small amounts of ethanolamine from the lumen to the cytosolic leaflet of the trans-Golgi network and ensures the maintenance of asymmetric distribution of phospholipids. The polypeptide is Phospholipid-transporting ATPase C887.12 (Schizosaccharomyces pombe (strain 972 / ATCC 24843) (Fission yeast)).